The sequence spans 275 residues: Coagulation factor IX (275 aa).

Tyrosine 23 is subject to Sulfotyrosine. A glycan (N-linked (GlcNAc...) asparagine) is linked at asparagine 25. Threonine 27 is modified (phosphothreonine). N-linked (GlcNAc...) asparagine glycosylation is present at asparagine 35. Threonine 47 is a glycosylation site (O-linked (GalNAc...) threonine). The region spanning 49–275 (IVGGENAKPG…YTRVSWYVNW (227 aa)) is the Peptidase S1 domain. An intrachain disulfide couples cysteine 74 to cysteine 90. The active-site Charge relay system is histidine 89. N-linked (GlcNAc...) asparagine glycosylation occurs at asparagine 96. 5 residues coordinate Ca(2+): glutamate 103, asparagine 105, glutamate 108, glutamate 110, and glutamate 113. An N-linked (GlcNAc...) asparagine glycan is attached at asparagine 128. Residue aspartate 137 is the Charge relay system of the active site. 2 cysteine pairs are disulfide-bonded: cysteine 204–cysteine 218 and cysteine 229–cysteine 257. Serine 233 acts as the Charge relay system in catalysis.

It belongs to the peptidase S1 family. In terms of assembly, heterodimer of a light chain and a heavy chain; disulfide-linked. Interacts (inactive and activated) with F11 (activated) in calcium-dependent manner. Interacts with SERPINC1. Activated by factor XIa, which excises the activation peptide. The propeptide can also be removed by snake venom protease. Activated by coagulation factor VIIa-tissue factor (F7-F3) complex in calcium-dependent manner.

The protein resides in the secreted. It carries out the reaction Selective cleavage of Arg-|-Ile bond in factor X to form factor Xa.. Its function is as follows. Factor IX is a vitamin K-dependent plasma protein that participates in the intrinsic pathway of blood coagulation by converting factor X to its active form in the presence of Ca(2+) ions, phospholipids, and factor VIIIa. The polypeptide is Coagulation factor IX (F9) (Oryctolagus cuniculus (Rabbit)).